The following is a 507-amino-acid chain: Glycerol kinase 1 (507 aa).

ADP is bound at residue Thr-12. ATP contacts are provided by Thr-12, Thr-13, and Ser-14. Residue Thr-12 participates in sn-glycerol 3-phosphate binding. Residue Arg-16 participates in ADP binding. Residues Arg-82, Glu-83, Tyr-134, and Asp-249 each contribute to the sn-glycerol 3-phosphate site. The glycerol site is built by Arg-82, Glu-83, Tyr-134, Asp-249, and Gln-250. Residues Thr-271 and Gly-315 each contribute to the ADP site. Residues Thr-271, Gly-315, Gln-319, and Gly-416 each contribute to the ATP site. Residues Gly-416 and Asn-420 each contribute to the ADP site.

This sequence belongs to the FGGY kinase family.

It catalyses the reaction glycerol + ATP = sn-glycerol 3-phosphate + ADP + H(+). It functions in the pathway polyol metabolism; glycerol degradation via glycerol kinase pathway; sn-glycerol 3-phosphate from glycerol: step 1/1. Its activity is regulated as follows. Inhibited by fructose 1,6-bisphosphate (FBP). In terms of biological role, key enzyme in the regulation of glycerol uptake and metabolism. Catalyzes the phosphorylation of glycerol to yield sn-glycerol 3-phosphate. In Streptomyces coelicolor (strain ATCC BAA-471 / A3(2) / M145), this protein is Glycerol kinase 1.